A 556-amino-acid polypeptide reads, in one-letter code: Neurofilament light polypeptide (556 aa).

S2 bears the N-acetylserine mark. Residues 2 to 94 (SSYGYDPFFP…KSIRSQERAQ (93 aa)) form a head region. An IF rod domain is found at 91–402 (ERAQLQDLND…KLLEGEETRL (312 aa)). Residues 95 to 126 (LQDLNDRFACFIERVHELEQQNKVLEAELLVL) form a coil 1A region. The interval 127–139 (RQKHAEPSRFRAL) is linker 1. Positions 140–235 (YEQEIRELRL…KVHEEELAEL (96 aa)) are coil 1B. The interval 236-254 (QAQIQYAHLSVEMDVSAKP) is linker 12. The tract at residues 255 to 273 (DLSAALRDIRAQYEKLAAR) is coil 2A. The linker 2 stretch occupies residues 274–282 (NMQNAEEWF). The coil 2B stretch occupies residues 283–398 (RSRFTVLSES…AAYRKLLEGE (116 aa)). The tail, subdomain A stretch occupies residues 399–445 (ETRLSFTSVGSITSGYTQTAPTFGRSAYSGLQSTSYLMTTRSFPTYY). Residues 399 to 556 (ETRLSFTSVG…KEETEVKKKA (158 aa)) are tail. A tail, subdomain B (acidic) region spans residues 446–556 (SSHVQEEQIE…KEETEVKKKA (111 aa)). Residues 464 to 473 (KAGEAKAAPA) show a composition bias toward low complexity. The segment at 464–556 (KAGEAKAAPA…KEETEVKKKA (93 aa)) is disordered. The segment covering 474 to 540 (EEGEEEEKEE…AEETGEEEKE (67 aa)) has biased composition (acidic residues). A compositionally biased stretch (basic and acidic residues) spans 541 to 556 (EKEAAGKEETEVKKKA).

Belongs to the intermediate filament family. As to quaternary structure, forms homodimers (in vitro).

It localises to the cell projection. Its subcellular location is the axon. The protein resides in the cytoplasm. The protein localises to the cytoskeleton. In terms of biological role, neurofilaments usually contain three intermediate filament proteins: NEFL, NEFM, and NEFH which are involved in the maintenance of neuronal caliber. May additionally cooperate with the neuronal intermediate filament proteins to form neuronal filamentous networks. The protein is Neurofilament light polypeptide (NEFL) of Coturnix japonica (Japanese quail).